The primary structure comprises 821 residues: DNA replication licensing factor MCM6 (821 aa).

Position 1 is an N-acetylmethionine (Met-1). 3 positions are modified to phosphoserine: Ser-13, Ser-219, and Ser-271. Thr-278 is modified (phosphothreonine). The region spanning 346–553 (LYHNLCTSLF…TDYAIARRIV (208 aa)) is the MCM domain. Residues His-359, Ser-399, Thr-400, Ala-401, Lys-402, Ser-403, and Asn-504 each coordinate ATP. Positions 528-531 (SRFD) match the Arginine finger motif. Residues Arg-619 and Glu-622 each contribute to the ADP site. An N6-acetyllysine modification is found at Lys-643. The disordered stretch occupies residues 676 to 706 (VDEGPDGINGHADSPAPASGINGHSEDMNQD). A phosphoserine mark is found at Ser-689 and Ser-762. Thr-791 carries the post-translational modification Phosphothreonine.

It belongs to the MCM family. In terms of assembly, component of the MCM2-7 complex. The complex forms a toroidal hexameric ring with the proposed subunit order MCM2-MCM6-MCM4-MCM7-MCM3-MCM5. Component of the CMG helicase complex, a hexameric ring of related MCM2-7 subunits stabilized by CDC45 and the tetrameric GINS complex. May interact with MCM10. Interacts with TIPIN. Interacts with CDT1. Interacts with MCMBP. Interacts with DDI2. In terms of processing, O-glycosylated (O-GlcNAcylated), in a cell cycle-dependent manner.

The protein resides in the nucleus. It is found in the chromosome. The enzyme catalyses ATP + H2O = ADP + phosphate + H(+). Acts as a component of the MCM2-7 complex (MCM complex) which is the replicative helicase essential for 'once per cell cycle' DNA replication initiation and elongation in eukaryotic cells. Core component of CDC45-MCM-GINS (CMG) helicase, the molecular machine that unwinds template DNA during replication, and around which the replisome is built. The active ATPase sites in the MCM2-7 ring are formed through the interaction surfaces of two neighboring subunits such that a critical structure of a conserved arginine finger motif is provided in trans relative to the ATP-binding site of the Walker A box of the adjacent subunit. The six ATPase active sites, however, are likely to contribute differentially to the complex helicase activity. In Bos taurus (Bovine), this protein is DNA replication licensing factor MCM6 (MCM6).